Consider the following 310-residue polypeptide: Carbamate kinase 1 (310 aa).

Homodimer (predominantly) and homotetramer.

The protein resides in the cytoplasm. It catalyses the reaction hydrogencarbonate + NH4(+) + ATP = carbamoyl phosphate + ADP + H2O + H(+). It participates in metabolic intermediate metabolism; carbamoyl phosphate degradation; CO(2) and NH(3) from carbamoyl phosphate: step 1/1. With respect to regulation, inhibited by adenosine(5')pentaphospho(5')adenosine (Ap5A), Ap6A and to a much lower extent by Ap4A. Catalyzes the reversible synthesis of carbamate and ATP from carbamoyl phosphate and ADP. Can also catalyze, although with low efficiency, the phosphorylation of bicarbonate, leading to the formation of carboxyphosphate, an unstable intermediate found in the reactions catalyzed by carbamoyl-phosphate synthase and biotin carboxylase. Can also use acetate. This Enterococcus faecium (Streptococcus faecium) protein is Carbamate kinase 1 (arcC1).